Reading from the N-terminus, the 324-residue chain is MRSDSLPTTICQERKKDPIEMFHSGQLVKVCAPMVRYSKLAFRTLVRKYSCDLCYTPMIIAADFVRSIKARDSEFTTNQGDCPLIVQFAANDARLLSDAALLVCPYANGIDINCGCPQRWAMADGYGACLINKPELVHDMVRQVRNRVESPRFSVSIKIRIHDDLARTIDLCRKAEATGVSWITVHGRTVEERHQPVHYDAIKMIKENVSIPIVANGDIRSLKEAENVWQMTGTDGVMVARGLLANPAMFAGYEETPLKCIWDWVDISLELGTPFMCFHQHLMYMMEKITSRQEKRVFNALSSTSAVLDYLTDHYGDESLSKSL.

FMN-binding positions include 33 to 35 (PMV) and Gln87. Cys116 serves as the catalytic Proton donor. FMN contacts are provided by residues Lys158, His186, 216 to 218 (NGD), and 240 to 241 (AR).

Belongs to the Dus family. Dus4 subfamily. It depends on FMN as a cofactor.

The enzyme catalyses 5,6-dihydrouridine(20a) in tRNA + NADP(+) = uridine(20a) in tRNA + NADPH + H(+). It carries out the reaction 5,6-dihydrouridine(20a) in tRNA + NAD(+) = uridine(20a) in tRNA + NADH + H(+). It catalyses the reaction 5,6-dihydrouridine(20b) in tRNA + NAD(+) = uridine(20b) in tRNA + NADH + H(+). The catalysed reaction is 5,6-dihydrouridine(20b) in tRNA + NADP(+) = uridine(20b) in tRNA + NADPH + H(+). Its function is as follows. Catalyzes the synthesis of dihydrouridine, a modified base found in the D-loop of most tRNAs. The protein is tRNA-dihydrouridine(20a/20b) synthase [NAD(P)+]-like (Dus4l) of Mus musculus (Mouse).